The sequence spans 326 residues: D-threonate 4-phosphate dehydrogenase (326 aa).

Residues His-138 and Thr-139 each coordinate substrate. His-168, His-212, and His-267 together coordinate a divalent metal cation. Substrate-binding residues include Lys-275, Asn-284, and Arg-293.

This sequence belongs to the PdxA family. PdxA2 subfamily. Homodimer. Requires a divalent metal cation as cofactor.

It catalyses the reaction 4-O-phospho-D-threonate + NAD(+) = dihydroxyacetone phosphate + CO2 + NADH. Functionally, catalyzes the NAD-dependent oxidation and subsequent decarboxylation of D-threonate 4-phosphate to produce dihydroxyacetone phosphate (DHAP). Can also use 4-hydroxy-L-threonine 4-phosphate as substrate. This chain is D-threonate 4-phosphate dehydrogenase, found in Pectobacterium atrosepticum (strain SCRI 1043 / ATCC BAA-672) (Erwinia carotovora subsp. atroseptica).